We begin with the raw amino-acid sequence, 148 residues long: Large ribosomal subunit protein uL15 (148 aa).

Positions 1–28 (MIRRRKKVRKLRGSHTHGWGCKKKHRGG) are enriched in basic residues. The segment at 1–43 (MIRRRKKVRKLRGSHTHGWGCKKKHRGGGSKGGRGMAGTGKRK) is disordered. Over residues 29-38 (GSKGGRGMAG) the composition is skewed to gly residues.

The protein belongs to the universal ribosomal protein uL15 family. In terms of assembly, part of the 50S ribosomal subunit.

In terms of biological role, binds to the 23S rRNA. The polypeptide is Large ribosomal subunit protein uL15 (Thermococcus kodakarensis (strain ATCC BAA-918 / JCM 12380 / KOD1) (Pyrococcus kodakaraensis (strain KOD1))).